A 605-amino-acid chain; its full sequence is Elongation factor 4 (605 aa).

One can recognise a tr-type G domain in the interval 9–192 (GMIRNFCIIA…AIVARVPAPA (184 aa)). Residues 21 to 26 (DHGKST) and 139 to 142 (NKID) contribute to the GTP site.

It belongs to the TRAFAC class translation factor GTPase superfamily. Classic translation factor GTPase family. LepA subfamily.

Its subcellular location is the cell inner membrane. The enzyme catalyses GTP + H2O = GDP + phosphate + H(+). Required for accurate and efficient protein synthesis under certain stress conditions. May act as a fidelity factor of the translation reaction, by catalyzing a one-codon backward translocation of tRNAs on improperly translocated ribosomes. Back-translocation proceeds from a post-translocation (POST) complex to a pre-translocation (PRE) complex, thus giving elongation factor G a second chance to translocate the tRNAs correctly. Binds to ribosomes in a GTP-dependent manner. The protein is Elongation factor 4 of Chlorobaculum tepidum (strain ATCC 49652 / DSM 12025 / NBRC 103806 / TLS) (Chlorobium tepidum).